We begin with the raw amino-acid sequence, 339 residues long: MTIQKNWQELIRPNKLQVTAGSDATRFATLVAEPLERGFGQTLGNALRRVLLSSLQGAAVQSVHIDGVLHEFSSIAGVREDVTDIVLNIKDISLKMQGEGPKRMVVKKQGPGVVTAGDIQTVGDIVVLNPDLQICTLDEGAEIRMEFTVNTGKGYVAAERNRPEDAPIGLIPVDSLYSPVRKVSYKVENTREGQILDYDKLTMTVETNGALTPDDAVAFAARILQDQLNVFVNFEEPRKEVTQEIIPDLAFNPAFLKKVDELELSVRSANCLKNDNIVYIGDLVQKSEAEMLRTPNFGRKSLNEIKEVLAQMGLHLGMEVPGWPPENIDELAKRFEDHY.

The alpha N-terminal domain (alpha-NTD) stretch occupies residues 1–235 (MTIQKNWQEL…DQLNVFVNFE (235 aa)). An alpha C-terminal domain (alpha-CTD) region spans residues 251 to 339 (FNPAFLKKVD…ELAKRFEDHY (89 aa)).

The protein belongs to the RNA polymerase alpha chain family. Homodimer. The RNAP catalytic core consists of 2 alpha, 1 beta, 1 beta' and 1 omega subunit. When a sigma factor is associated with the core the holoenzyme is formed, which can initiate transcription.

The enzyme catalyses RNA(n) + a ribonucleoside 5'-triphosphate = RNA(n+1) + diphosphate. Functionally, DNA-dependent RNA polymerase catalyzes the transcription of DNA into RNA using the four ribonucleoside triphosphates as substrates. The polypeptide is DNA-directed RNA polymerase subunit alpha (Rhodopseudomonas palustris (strain HaA2)).